The primary structure comprises 1036 residues: Isoleucine--tRNA ligase (1036 aa).

The 'HIGH' region signature appears at 46–56; it reads PFATGLPHYGH. The short motif at 589 to 593 is the 'KMSKS' region element; that stretch reads KMSKR. Position 592 (Lys-592) interacts with ATP.

It belongs to the class-I aminoacyl-tRNA synthetase family. IleS type 2 subfamily. As to quaternary structure, monomer. Requires Zn(2+) as cofactor.

It localises to the cytoplasm. The catalysed reaction is tRNA(Ile) + L-isoleucine + ATP = L-isoleucyl-tRNA(Ile) + AMP + diphosphate. In terms of biological role, catalyzes the attachment of isoleucine to tRNA(Ile). As IleRS can inadvertently accommodate and process structurally similar amino acids such as valine, to avoid such errors it has two additional distinct tRNA(Ile)-dependent editing activities. One activity is designated as 'pretransfer' editing and involves the hydrolysis of activated Val-AMP. The other activity is designated 'posttransfer' editing and involves deacylation of mischarged Val-tRNA(Ile). This chain is Isoleucine--tRNA ligase, found in Chlamydia trachomatis serovar D (strain ATCC VR-885 / DSM 19411 / UW-3/Cx).